The primary structure comprises 160 residues: Large ribosomal subunit protein eL21A (160 aa).

A Glycyl lysine isopeptide (Lys-Gly) (interchain with G-Cter in ubiquitin) cross-link involves residue lysine 32.

This sequence belongs to the eukaryotic ribosomal protein eL21 family. Component of the large ribosomal subunit (LSU). Mature yeast ribosomes consist of a small (40S) and a large (60S) subunit. The 40S small subunit contains 1 molecule of ribosomal RNA (18S rRNA) and 33 different proteins (encoded by 57 genes). The large 60S subunit contains 3 rRNA molecules (25S, 5.8S and 5S rRNA) and 46 different proteins (encoded by 81 genes).

It is found in the cytoplasm. Component of the ribosome, a large ribonucleoprotein complex responsible for the synthesis of proteins in the cell. The small ribosomal subunit (SSU) binds messenger RNAs (mRNAs) and translates the encoded message by selecting cognate aminoacyl-transfer RNA (tRNA) molecules. The large subunit (LSU) contains the ribosomal catalytic site termed the peptidyl transferase center (PTC), which catalyzes the formation of peptide bonds, thereby polymerizing the amino acids delivered by tRNAs into a polypeptide chain. The nascent polypeptides leave the ribosome through a tunnel in the LSU and interact with protein factors that function in enzymatic processing, targeting, and the membrane insertion of nascent chains at the exit of the ribosomal tunnel. This chain is Large ribosomal subunit protein eL21A, found in Saccharomyces cerevisiae (strain ATCC 204508 / S288c) (Baker's yeast).